Consider the following 219-residue polypeptide: GTP-binding protein Rab-3D (219 aa).

Ala-2 is modified (N-acetylalanine). 29-37 is a binding site for GDP; the sequence is GNSSVGKTS. Residues Ser-31, Ser-32, Val-33, Gly-34, Lys-35, Thr-36, Ser-37, Pro-49, and Ser-53 each coordinate GTP. A Mg(2+)-binding site is contributed by Thr-36. A Switch 1 motif is present at residues 49–58; sequence PAFVSTVGID. 2 residues coordinate Mg(2+): Thr-54 and Asp-77. GTP is bound at residue Gly-80. Positions 80-96 match the Switch 2 motif; sequence GQERYRTITTAYYRGAM. The residue at position 86 (Thr-86) is a Phosphothreonine. GTP is bound by residues Asn-135, Lys-136, Asp-138, Ala-166, and Lys-167. Residues 135-138 and 165-167 each bind GDP; these read NKCD and SAK. Phosphoserine is present on Ser-190. Positions 190–219 are disordered; that stretch reads SLEPSSSPGSNGKGPALGDTPPPQPSSCGC. Over residues 193–203 the composition is skewed to low complexity; sequence PSSSPGSNGKG. A compositionally biased stretch (pro residues) spans 209–219; the sequence is TPPPQPSSCGC. S-geranylgeranyl cysteine attachment occurs at residues Cys-217 and Cys-219. Residue Cys-219 is modified to Cysteine methyl ester; partial.

It belongs to the small GTPase superfamily. Rab family. As to quaternary structure, interacts with RIMS1, RIMS2, RPH3A and RPH3AL. Interacts with RAB3IP. The GTP-bound form interacts with REP15. Interacts with CHM; phosphorylation at Thr-86 disrupts this interaction. Interacts with MADD (via uDENN domain); the GTP-bound form is preferred for interaction. Mg(2+) serves as cofactor. In terms of processing, in fetal glands the majority of the proteins are methylated, whereas in neonatal and adult glands, only 50% are methylated. Phosphorylation of Thr-86 in the switch II region by LRRK2 prevents the association of RAB regulatory proteins, including CHM. Highest levels found in lung.

It localises to the cell membrane. The catalysed reaction is GTP + H2O = GDP + phosphate + H(+). Regulated by guanine nucleotide exchange factors (GEFs) which promote the exchange of bound GDP for free GTP. Regulated by GTPase activating proteins (GAPs) which increase the GTP hydrolysis activity. Inhibited by GDP dissociation inhibitors (GDIs) which prevent Rab-GDP dissociation. The small GTPases Rab are key regulators of intracellular membrane trafficking, from the formation of transport vesicles to their fusion with membranes. Rabs cycle between an inactive GDP-bound form and an active GTP-bound form that is able to recruit to membranes different sets of downstream effectors directly responsible for vesicle formation, movement, tethering and fusion. RAB3D may be involved in the insulin-induced exocytosis of GLUT4-containing vesicles in adipocytes. In Rattus norvegicus (Rat), this protein is GTP-binding protein Rab-3D.